A 222-amino-acid chain; its full sequence is Adenylate kinase (222 aa).

Position 16 to 21 (Gly-16 to Thr-21) interacts with ATP. The NMP stretch occupies residues Ala-36–Val-65. AMP contacts are provided by residues Thr-37, Arg-42, Gly-63–Val-65, Gly-92–Arg-95, and Gln-99. Residues Gly-133 to Asp-170 form an LID region. ATP is bound by residues Arg-134 and Ser-143–Tyr-144. AMP is bound by residues Arg-167 and Arg-178. Gln-206 is an ATP binding site.

It belongs to the adenylate kinase family. AK2 subfamily. As to quaternary structure, monomer.

The protein resides in the cytoplasm. It is found in the cytosol. The protein localises to the mitochondrion intermembrane space. It catalyses the reaction AMP + ATP = 2 ADP. In terms of biological role, catalyzes the reversible transfer of the terminal phosphate group between ATP and AMP. Plays an important role in cellular energy homeostasis and in adenine nucleotide metabolism. Adenylate kinase activity is critical for regulation of the phosphate utilization and the AMP de novo biosynthesis pathways. The protein is Adenylate kinase of Candida glabrata (strain ATCC 2001 / BCRC 20586 / JCM 3761 / NBRC 0622 / NRRL Y-65 / CBS 138) (Yeast).